We begin with the raw amino-acid sequence, 757 residues long: DNA endonuclease RBBP8 (757 aa).

The segment at 22-45 (DLWTKLKEYHDKETQGLQVKVTKL) is essential for binding to the MRN complex and for RPA focus formation on DNA damage. Residues 35-84 (TQGLQVKVTKLKKERILDAQRLEEFFTKNQQLREQQKVLHETIKVLEDRL) adopt a coiled-coil conformation. A required for interaction with LMO4, probably by stabilizing the interaction through RPPB8 dimerization region spans residues 45 to 160 (LKKERILDAQ…TDLESEEDVI (116 aa)). Glycyl lysine isopeptide (Lys-Gly) (interchain with G-Cter in SUMO2) cross-links involve residues Lys62 and Lys115. Positions 117–138 (ITELMNEKNTLQEENKKLSEQL) form a coiled coil. Lys193 is covalently cross-linked (Glycyl lysine isopeptide (Lys-Gly) (interchain with G-Cter in SUMO2)). The residue at position 272 (Ser272) is a Phosphoserine. A Phosphothreonine modification is found at Thr309. Phosphoserine occurs at positions 320, 321, and 343. The interval 348–375 (GKKTHLKTVPLSNTSAPGPEKPRSKSED) is disordered. Residues Lys354 and Lys372 each participate in a glycyl lysine isopeptide (Lys-Gly) (interchain with G-Cter in SUMO2) cross-link. Residue Ser373 is modified to Phosphoserine. Glycyl lysine isopeptide (Lys-Gly) (interchain with G-Cter in SUMO2) cross-links involve residues Lys390, Lys399, and Lys405. Residues 407–417 (TSEPISEQGNI) show a composition bias toward polar residues. The tract at residues 407–430 (TSEPISEQGNIGHSKDTDRDKHVV) is disordered. Residues 419–429 (HSKDTDRDKHV) are compositionally biased toward basic and acidic residues. Residues Lys433 and Lys443 each participate in a glycyl lysine isopeptide (Lys-Gly) (interchain with G-Cter in SUMO2) cross-link. A PXDLS motif region spans residues 484–488 (PLDLS). Positions 484 to 488 (PLDLS) match the PXDLS motif motif. The interval 503-551 (CENSKIRFRQVTLYEALKPIPRDSSSSRKALSGSCGLTKDSPEEPCLQE) is damage-recruitment motif. Lys520 participates in a covalent cross-link: Glycyl lysine isopeptide (Lys-Gly) (interchain with G-Cter in SUMO2); alternate. Positions 524-544 (RDSSSSRKALSGSCGLTKDSP) are disordered. Glycyl lysine isopeptide (Lys-Gly) (interchain with G-Cter in SUMO2) cross-links involve residues Lys564 and Lys570. A Glycyl lysine isopeptide (Lys-Gly) (interchain with G-Cter in SUMO2); alternate cross-link involves residue Lys596. Glycyl lysine isopeptide (Lys-Gly) (interchain with G-Cter in SUMO2) cross-links involve residues Lys605, Lys630, and Lys632. Residues 633–677 (SLQNNQDVSFENIQWSIDPGADLSQYKMGVTVDDTKDGSQSRLAG) are required for interaction with LMO4, probably by making physical contact with LMO4. Residue Ser656 is modified to Phosphoserine; by ATM. Lys668 is covalently cross-linked (Glycyl lysine isopeptide (Lys-Gly) (interchain with G-Cter in SUMO2)). Position 671 is a phosphoserine (Ser671). Residues 696–728 (KKQEQKGEESPNGERKMNDSLEDMFDRTTHEEY) show a composition bias toward basic and acidic residues. Positions 696–757 (KKQEQKGEES…TTTKKPNISW (62 aa)) are disordered. Lys711 is covalently cross-linked (Glycyl lysine isopeptide (Lys-Gly) (interchain with G-Cter in SUMO2)). Ser715 carries the post-translational modification Phosphoserine. Residues 747–757 (STTTKKPNISW) are compositionally biased toward polar residues.

This sequence belongs to the COM1/SAE2/CtIP family. As to quaternary structure, homotetramer; formed by antiparallel association of helical extensions protruding from the N-termini of two parallel coiled-coil dimers. Forms a dumbbell-shaped particle in which polar globular domains are held about 30 nm apart by a central rod. Homotetramerization is required for DNA-end resection and repair. Interacts (via the PXDLS motif) with CTBP1; the interaction is disrupted via binding of the adenovirus E1A to CTBP1. Component of the BRCA1-RBBP8 complex. Interacts (the Ser-321 phosphorylated form) with BRCA1 (via the C-terminal BRCT domains): the interaction occurs in the G2 phase, ubiquitinates RBBP8 and involves RBBP8 in BRCA1-dependent G2/M checkpoint control on DNA damage. Interacts with RB1. Interacts with the MRN complex. Interacts directly with MRE11; the interaction is required for efficient homologous recombination (HR) and regulation of the MRN complex. Interacts directly with RAD50. Interacts (when phosphorylated by CDK1) with NBN; promoting association with the MRN complex. Interacts with LMO4 (via the LIM zinc-binding 1 domain). Interacts with SIAH1. Interacts with RNF138. Interacts with EXD2. Interacts with CUL3 and KLHL15; this interaction leads to RBBP8 proteasomal degradation. Directly interacts with PIN1; this interaction depends upon RBBP8 phosphorylation, predominantly at Thr-309. Interacts with FZR1; this interaction leads to APC/C-mediated RBBP8 proteasomal degradation. Interacts with AUNIP; leading to recruit RBBP8 to sites of DNA damage. Interacts with SAMHD1. Interacts with HDGFL2. In terms of processing, hyperphosphorylation upon ionizing radiation results in dissociation from BRCA1. Phosphorylation by CDK1 is essential for the recruitment to DNA and the DNA repair function. Phosphorylated on Ser-321 as cells enter G2 phase. This phosphorylation is required for binding BRCA1 and for the G2/M DNA damage transition checkpoint control. Phosphorylation at Thr-309, probably catalyzed by CDK2, is required for PIN1-binding, while phosphorylation at Ser-272 serves as a PIN1 isomerization site. Phosphorylation at Thr-309 is cell-cycle dependent. It steadily increases during S phase, peaks at late S/G2 phase, and drops at G1. Phosphorylation is not required for tetramerization. Binds to DNA more strongly when dephosphorylated. Post-translationally, ubiquitinated. Ubiquitination at multiple sites by BRCA1 (via its N-terminal RING domain) does not lead to its proteasomal degradation but instead the ubiquitinated RBBP8 binds to chromatin following DNA damage and may play a role in G2/M checkpoint control. Ubiquitinated by RNF138 at its N-terminus. Ubiquitinated through 'Lys-48' by the E3 CUL3-KLHL15 complex; this modification leads to proteasomal degradation. Ubiquitinated by the E3 FZR1/APC/C complex; this modification leads to proteasomal degradation.

The protein resides in the nucleus. It is found in the chromosome. Its function is as follows. Endonuclease that cooperates with the MRE11-RAD50-NBN (MRN) complex in DNA-end resection, the first step of double-strand break (DSB) repair through the homologous recombination (HR) pathway. HR is restricted to S and G2 phases of the cell cycle and preferentially repairs DSBs resulting from replication fork collapse. Key determinant of DSB repair pathway choice, as it commits cells to HR by preventing classical non-homologous end-joining (NHEJ). Specifically promotes the endonuclease activity of the MRN complex to clear DNA ends containing protein adducts: recruited to DSBs by NBN following phosphorylation by CDK1, and promotes the endonuclease activity of MRE11 to clear protein-DNA adducts and generate clean double-strand break ends. Functions downstream of the MRN complex and ATM, promotes ATR activation and its recruitment to DSBs in the S/G2 phase facilitating the generation of ssDNA. Component of the BRCA1-RBBP8 complex that regulates CHEK1 activation and controls cell cycle G2/M checkpoints on DNA damage. During immunoglobulin heavy chain class-switch recombination, promotes microhomology-mediated alternative end joining (A-NHEJ) and plays an essential role in chromosomal translocations. Binds preferentially to DNA Y-junctions and to DNA substrates with blocked ends and promotes intermolecular DNA bridging. In Bos taurus (Bovine), this protein is DNA endonuclease RBBP8 (RBBP8).